Reading from the N-terminus, the 753-residue chain is Translation initiation factor IF-2 (753 aa).

A disordered region spans residues 1-166 (MSEKPRRDTG…PVMRPRGPVA (166 aa)). Composition is skewed to low complexity over residues 19-43 (STGQ…ATGA), 71-81 (NARPAAPANAR), and 102-122 (TPAP…TNTR). The span at 133 to 146 (PQPEEREREREAVL) shows a compositional bias: basic and acidic residues. Positions 153-162 (TTTRPVMRPR) are enriched in low complexity. Positions 249 to 418 (PRPPVVTIMG…LLVADLEDLR (170 aa)) constitute a tr-type G domain. The segment at 258–265 (GHVDHGKT) is G1. 258–265 (GHVDHGKT) is a binding site for GTP. The segment at 283 to 287 (GITQH) is G2. Positions 304-307 (DTPG) are G3. GTP-binding positions include 304–308 (DTPGH) and 358–361 (NKID). The G4 stretch occupies residues 358–361 (NKID). Residues 394–396 (SAR) form a G5 region.

The protein belongs to the TRAFAC class translation factor GTPase superfamily. Classic translation factor GTPase family. IF-2 subfamily.

Its subcellular location is the cytoplasm. Its function is as follows. One of the essential components for the initiation of protein synthesis. Protects formylmethionyl-tRNA from spontaneous hydrolysis and promotes its binding to the 30S ribosomal subunits. Also involved in the hydrolysis of GTP during the formation of the 70S ribosomal complex. This Chloroflexus aggregans (strain MD-66 / DSM 9485) protein is Translation initiation factor IF-2.